Reading from the N-terminus, the 1862-residue chain is Transient receptor potential cation channel subfamily M member 7 (1862 aa).

An N-acetylmethionine modification is found at Met1. Residues 1 to 850 lie on the Cytoplasmic side of the membrane; it reads MSQKSWIEST…ITRKFYAFYH (850 aa). Ser101 is modified (phosphoserine). The segment covering 544–554 has biased composition (low complexity); it reads NRRSGRNASSS. The tract at residues 544–574 is disordered; that stretch reads NRRSGRNASSSTPQLRKSHETFGNRADKKEK. Residues 560–573 are compositionally biased toward basic and acidic residues; the sequence is KSHETFGNRADKKE. The chain crosses the membrane as a helical span at residues 851 to 876; it reads APIVKFWFNTLAYLGFLMLYTFVVLV. At 877–882 the chain is on the extracellular side; that stretch reads QMEQLP. Residues 883–904 form a helical membrane-spanning segment; that stretch reads SVQEWIVIAYIFTYAIEKIREV. Residues 905–923 lie on the Cytoplasmic side of the membrane; the sequence is FMSEAGKISQKIKVWFSDY. Residues 924-943 form a helical membrane-spanning segment; that stretch reads FNVSDTIAIISFFVGFGLRF. Residues 944–956 are Extracellular-facing; sequence GAKWNYINAYDNH. A helical membrane pass occupies residues 957 to 980; it reads VFVAGRLIYCLNIIFWYVRLLDFL. The Cytoplasmic portion of the chain corresponds to 981 to 999; sequence AVNQQAGPYVMMIGKMVAN. A helical membrane pass occupies residues 1000–1023; sequence MFYIVVIMALVLLSFGVPRKAILY. Residues 1024–1025 lie on the Extracellular side of the membrane; sequence PH. Positions 1026 to 1066 form an intramembrane region, pore-forming; sequence EEPSWSLAKDIVFHPYWMIFGEVYAYEIDVCANDSALPTIC. Residues 1067–1069 lie on the Extracellular side of the membrane; it reads GPG. Residues 1070–1098 traverse the membrane as a helical segment; that stretch reads TWLTPFLQAVYLFVQYIIMVNLLIAFFNN. The Cytoplasmic portion of the chain corresponds to 1099–1862; the sequence is VYLQVKAISN…EATNSVRLML (764 aa). 3 S-palmitoyl cysteine lipidation sites follow: Cys1143, Cys1144, and Cys1146. At Thr1163 the chain carries Phosphothreonine. A phosphoserine mark is found at Ser1191, Ser1193, Ser1224, Ser1255, and Ser1258. Residues 1198 to 1250 adopt a coiled-coil conformation; that stretch reads RVTFERVEQMSIQIKEVGDRVNYIKRSLQSLDSQIGHLQDLSALTVDTLKTLT. Phosphothreonine is present on Thr1265. 9 positions are modified to phosphoserine: Ser1300, Ser1357, Ser1360, Ser1385, Ser1386, Ser1389, Ser1394, Ser1395, and Ser1403. A disordered region spans residues 1380 to 1418; that stretch reads NQKLGSSPNSSPHMSSPPTKFSVSTPSQPSCKSHLESTT. Positions 1385-1397 are enriched in low complexity; the sequence is SSPNSSPHMSSPP. Positions 1398 to 1410 are enriched in polar residues; that stretch reads TKFSVSTPSQPSC. Thr1404 carries the phosphothreonine modification. Phosphoserine is present on residues Ser1406 and Ser1445. Position 1454 is a phosphothreonine (Thr1454). Ser1455 is subject to Phosphoserine. 2 positions are modified to phosphothreonine: Thr1466 and Thr1470. Residues 1485–1511 are disordered; the sequence is TPTSLHSEQESCSRRASTEDSPDVDSR. 5 positions are modified to phosphoserine: Ser1491, Ser1497, Ser1501, Ser1510, and Ser1530. Over residues 1491-1502 the composition is skewed to basic and acidic residues; that stretch reads SEQESCSRRAST. Thr1534 carries the phosphothreonine modification. Ser1540 carries the phosphoserine modification. The residue at position 1548 (Thr1548) is a Phosphothreonine. Ser1564 and Ser1566 each carry phosphoserine. A Phosphothreonine modification is found at Thr1580. In terms of domain architecture, Alpha-type protein kinase spans 1591-1821; the sequence is ILNNSMSSWS…CCRKLKLPDL (231 aa). Ser1595 and Ser1612 each carry phosphoserine. The ADP site is built by Gly1618, Gly1619, Leu1620, Arg1621, and Lys1645. Residue Ser1657 is modified to Phosphoserine. Phosphothreonine is present on Thr1682. Glu1717, Glu1718, and Met1720 together coordinate ADP. His1750 lines the Zn(2+) pocket. Asp1764 acts as the Proton acceptor in catalysis. Residue Asp1774 coordinates ADP. Phosphoserine is present on Ser1776. Zn(2+) is bound by residues His1807, Cys1809, and Cys1813. Thr1827 is modified (phosphothreonine). Residues 1840–1862 form a disordered region; that stretch reads DLNLQAGNSTKESEATNSVRLML. Phosphoserine is present on residues Ser1848 and Ser1857.

In the C-terminal section; belongs to the protein kinase superfamily. Alpha-type protein kinase family. ALPK subfamily. It in the N-terminal section; belongs to the transient receptor (TC 1.A.4) family. LTrpC subfamily. TRPM7 sub-subfamily. In terms of assembly, homodimer. Homotetramer. Forms heteromers with TRPM6; heteromeric channels are functionally different from the homomeric channels. Interacts with PLCB1. It depends on Zn(2+) as a cofactor. Post-translationally, palmitoylated; palmitoylation at Cys-1143, Cys-1144 and Cys-1146 promotes TRPM7 trafficking from the Golgi to the surface membrane. In terms of processing, autophosphorylated; autophosphorylation regulates TRPM7 kinase activity towards its substrates. The C-terminal kinase domain can be cleaved from the channel segment in a cell-type-specific fashion. TRPM7 is cleaved by caspase-8, dissociating the kinase from the ion-conducting pore. The cleaved kinase fragments (M7CKs) can translocate to the cell nucleus and binds chromatin-remodeling complex proteins in a Zn(2+)-dependent manner to ultimately phosphorylate specific Ser/Thr residues of histones.

The protein localises to the cell membrane. Its subcellular location is the cytoplasmic vesicle membrane. It localises to the nucleus. The catalysed reaction is L-seryl-[protein] + ATP = O-phospho-L-seryl-[protein] + ADP + H(+). It catalyses the reaction L-threonyl-[protein] + ATP = O-phospho-L-threonyl-[protein] + ADP + H(+). It carries out the reaction Mg(2+)(in) = Mg(2+)(out). The enzyme catalyses Ca(2+)(in) = Ca(2+)(out). The catalysed reaction is Zn(2+)(in) = Zn(2+)(out). With respect to regulation, channel displays constitutive activity. Channel activity is negatively regulated by cytosolic Mg(2+), Mg-ATP, low intracellular pH. Resting free cytosolic Mg(2+) and Mg-ATP concentrations seem to be sufficient to block native TRPM7 channel activity. TRPM7 channel activity is highly dependent on membrane levels of phosphatidylinositol 4,5 bisphosphate (PIP2). PIP2 hydrolysis negatively regulates TRPM7 channel activity. TRPM7 kinase activity does not affect channel activity. The kinase activity is controlled through the autophosphorylation of a serine/threonine-rich region located N-terminal to the catalytic domain. Functionally, bifunctional protein that combines an ion channel with an intrinsic kinase domain, enabling it to modulate cellular functions either by conducting ions through the pore or by phosphorylating downstream proteins via its kinase domain. The channel is highly permeable to divalent cations, specifically calcium (Ca2+), magnesium (Mg2+) and zinc (Zn2+) and mediates their influx. Controls a wide range of biological processes such as Ca2(+), Mg(2+) and Zn(2+) homeostasis, vesicular Zn(2+) release channel and intracellular Ca(2+) signaling, embryonic development, immune responses, cell motility, proliferation and differentiation. The C-terminal alpha-kinase domain autophosphorylates cytoplasmic residues of TRPM7. TRPM7 phosphorylates SMAD2, suggesting that TRPM7 kinase may play a role in activating SMAD signaling pathways. In vitro, TRPM7 kinase phosphorylates ANXA1 (annexin A1), myosin II isoforms and a variety of proteins with diverse cellular functions. In terms of biological role, the cleaved channel exhibits substantially higher current and potentiates Fas receptor signaling. Its function is as follows. The C-terminal kinase domain can be cleaved from the channel segment in a cell-type-specific fashion. In immune cells, the TRPM7 kinase domain is clipped from the channel domain by caspases in response to Fas-receptor stimulation. The cleaved kinase fragments can translocate to the nucleus, and bind chromatin-remodeling complex proteins in a Zn(2+)-dependent manner to ultimately phosphorylate specific Ser/Thr residues of histones known to be functionally important for cell differentiation and embryonic development. The chain is Transient receptor potential cation channel subfamily M member 7 from Rattus norvegicus (Rat).